Consider the following 585-residue polypeptide: Efflux pump dotC (585 aa).

The span at 1 to 34 (MSEDHTKADNLSEKDPHSPERSDSSSHEDAHARE) shows a compositional bias: basic and acidic residues. A disordered region spans residues 1–45 (MSEDHTKADNLSEKDPHSPERSDSSSHEDAHAREEEESSDDDGAL). Residue N10 is glycosylated (N-linked (GlcNAc...) asparagine). Over residues 35–44 (EEESSDDDGA) the composition is skewed to acidic residues. Residues 51 to 71 (SLIAIVMIALSLIGLQLAVFL) traverse the membrane as a helical segment. Residue N91 is glycosylated (N-linked (GlcNAc...) asparagine). 13 helical membrane-spanning segments follow: residues 94-114 (AAYT…TPIW), 132-152 (ALFM…MLIT), 158-178 (GAAG…LFSL), 186-206 (GMIG…GGAF), 214-234 (WCFY…FFFL), 247-267 (FAAI…MFLF), 280-300 (SATV…FGLV), 323-343 (ALLV…YLPL), 353-373 (PILA…SAAA), 385-405 (LIPM…LINF), 414-434 (LIIY…APLV), 449-471 (TATF…QVLY), and 524-544 (SPMW…ILLV). The interval 564–585 (KKAEAERKAERQAKDLEKAQKS) is disordered.

It belongs to the major facilitator superfamily. TCR/Tet family.

Its subcellular location is the cell membrane. It is found in the vacuole membrane. In terms of biological role, efflux pump; part of the gene cluster that mediates the biosynthesis of dothistromin (DOTH), a polyketide toxin very similar in structure to the aflatoxin precursor, versicolorin B. One function of dotC may be to transport early-stage dothistromin biosynthetic intermediates from the cytoplasm into vacuoles, thereby affecting the rate of dothistromin production. The sequence is that of Efflux pump dotC from Dothistroma septosporum (Red band needle blight fungus).